A 547-amino-acid chain; its full sequence is CTP synthase (547 aa).

The interval 1 to 265 (MARYVFITGG…DQAVLDAFGI (265 aa)) is amidoligase domain. Position 13 (S13) interacts with CTP. S13 serves as a coordination point for UTP. ATP-binding positions include 14-19 (SLGKGL) and D71. Positions 71 and 139 each coordinate Mg(2+). Residues 146–148 (DIE), 186–191 (KTKPTQ), and K222 contribute to the CTP site. UTP contacts are provided by residues 186–191 (KTKPTQ) and K222. The 256-residue stretch at 291–546 (RVAIVGKYTQ…VRAAVEVSRL (256 aa)) folds into the Glutamine amidotransferase type-1 domain. G353 lines the L-glutamine pocket. The active-site Nucleophile; for glutamine hydrolysis is the C380. L-glutamine contacts are provided by residues 381-384 (LGMQ), E404, and R474. Active-site residues include H519 and E521.

This sequence belongs to the CTP synthase family. Homotetramer.

It carries out the reaction UTP + L-glutamine + ATP + H2O = CTP + L-glutamate + ADP + phosphate + 2 H(+). It catalyses the reaction L-glutamine + H2O = L-glutamate + NH4(+). The enzyme catalyses UTP + NH4(+) + ATP = CTP + ADP + phosphate + 2 H(+). It participates in pyrimidine metabolism; CTP biosynthesis via de novo pathway; CTP from UDP: step 2/2. Its activity is regulated as follows. Allosterically activated by GTP, when glutamine is the substrate; GTP has no effect on the reaction when ammonia is the substrate. The allosteric effector GTP functions by stabilizing the protein conformation that binds the tetrahedral intermediate(s) formed during glutamine hydrolysis. Inhibited by the product CTP, via allosteric rather than competitive inhibition. Its function is as follows. Catalyzes the ATP-dependent amination of UTP to CTP with either L-glutamine or ammonia as the source of nitrogen. Regulates intracellular CTP levels through interactions with the four ribonucleotide triphosphates. In Cereibacter sphaeroides (strain ATCC 17023 / DSM 158 / JCM 6121 / CCUG 31486 / LMG 2827 / NBRC 12203 / NCIMB 8253 / ATH 2.4.1.) (Rhodobacter sphaeroides), this protein is CTP synthase.